A 3477-amino-acid polypeptide reads, in one-letter code: Abnormal spindle-like microcephaly-associated protein (3477 aa).

The interval 1–30 (MANRRVGRGCWEVSPTERRPPAGLRGPAAE) is disordered. A phosphoserine mark is found at serine 280, serine 283, serine 367, and serine 392. Residues 308-409 (ITQSQIHFLS…NMAYMCTSQQ (102 aa)) are sufficient for interaction with KATNA1:KATNB1. The span at 415 to 424 (LSNENSQVPQ) shows a compositional bias: polar residues. 2 disordered regions span residues 415–443 (LSNENSQVPQSPEDWRKSEVSPRIPECQG) and 559–581 (KNEVTPSSTTASVARKRKSDGSM). Serine 425 carries the phosphoserine modification. The span at 560–570 (NEVTPSSTTAS) shows a compositional bias: polar residues. A Phosphoserine modification is found at serine 605. A Calponin-homology (CH) 1 domain is found at 920-1056 (KASKEILLAF…LLWKIAFAFQ (137 aa)). Residues 1057 to 1078 (VDISLNLDQLKEEIAFLKHTKS) are a coiled coil. Serine 1103 is modified (phosphoserine). A Calponin-homology (CH) 2 domain is found at 1110–1261 (SENIKLLMDW…YLSFLCARLL (152 aa)). IQ domains lie at 1347–1378 (QNKAASLIQGYWRRYSTRQRFLKLKYYSIILQ), 1393–1422 (YLWATVTIQRHWRAYLRRKQDQQRYEMLKS), 1582–1613 (LKKTIIKFQAHVRKHQQRQKYKKMKKAAVIIQ), 1632–1661 (TRSAVIVLQSAYRGMQARKMYIHILTSVIK), 1655–1684 (ILTSVIKIQSYYRAYVSKKEFLSLKNATIK), 1728–1757 (MRESCIKLQAFVRGYLVRKQMRLQRKAVIS), 1751–1782 (QRKAVISLQSYFRMRKARQYYLKMYKAIIVIQ), 1801–1830 (VKKAATCLQAAYRGYKVRQLIKQQSIAALK), 1824–1853 (QSIAALKIQSAFRGYNKRVKYQSVLQSIIK), 1874–1903 (TKAAVISLQSAYRGWKVRKQIRREHQAALK), 1897–1928 (EHQAALKIQSAFRMAKAQKQFRLFKTAALVIQ), 1947–1978 (LRHAVLVLQSMWKGKTLRRQLQRQHKCAIIIQ), 1970–2001 (QHKCAIIIQSYYRMHVQQKKWKIMKKAALLIQ), 2020–2049 (TKAAVVTLQSAYRGMKVRKRIKDCNKAAVT), 2043–2074 (CNKAAVTIQSKYRAYKTKKKYATYRASAIIIQ), 2093–2124 (LKKTAIKIQSVYRGIRVRRHIQHMHRAATFIK), 2116–2147 (MHRAATFIKAMFKMHQSRISYHTMRKAAIVIQ), 2166–2197 (ILKAVKVLQASFRGVRVRRTLRKMQTAATLIQ), 2189–2218 (MQTAATLIQSNYRRYRQQTYFNKLKKITKT), 2239–2270 (LRHSVIYIQAIFRGKKARRHLKMMHIAATLIQ), 2262–2293 (MHIAATLIQRRFRTLMMRRRFLSLKKTAILIQ), 2311–2342 (VQNAVIKIQSSYRRWMIRKRMREMHRAATFIQ), 2334–2365 (MHRAATFIQSTFRMHRLHMRYQALKQASVVIQ), 2384–2415 (QRHSAVILQAAFRGMKTRRHLKSMHSSATLIQ), 2407–2438 (MHSSATLIQSRFRSLLVRRRFISLKKATIFVQ), 2457–2488 (LRKAAITIQSSYRRLMVKKKLQEMQRAAVLIQ), 2530–2561 (QWHSAVVIQAAYKGMKARQLLREKHKASIVIQ), 2624–2653 (QHQAAIIIQKHCKAFKIRKHYLHLRATVVS), 2665–2696 (RTQAVICIQSYYRGFKVRKDIQNMHRAATLIQ), 2688–2719 (MHRAATLIQSFYRMHRAKVDYETKKTAIVVIQ), 2738–2767 (VQKSVRTIQAAFRGMKVRQKLKNVSEEKMA), 2859–2890 (QKRAAITLQHYFRTWQTRKQFLLYRKAAVVLQ), 2909–2938 (IRSSVIIIQARSKGFIQKRKFQEIKNSTIK), 2932–2963 (IKNSTIKIQAMWRRYRAKKYLCKVKAACKIQA), 2954–2985 (KVKAACKIQAWYRCWRAHKEYLAILKAVKIIQ), 3029–3060 (RHRAACLIQAHYRGYKGRQVFLRQKSAALIIQ), 3079–3110 (FKKSTVILQALVRGWLVRKRFLEQRAKIRLLH), 3181–3210 (RNRAASVIQKAVRHFLLRKKQEKFTSGIIK), and 3204–3235 (FTSGIIKIQALWRGYSWRKKNDCTKIKAIRLS).

Interacts with KATNA1 and KATNB1; katanin complex formation KATNA1:KATNB1 is required for the association.

The protein resides in the cytoplasm. The protein localises to the cytoskeleton. Its subcellular location is the spindle. It is found in the nucleus. Functionally, involved in mitotic spindle regulation and coordination of mitotic processes. The function in regulating microtubule dynamics at spindle poles including spindle orientation, astral microtubule density and poleward microtubule flux seems to depend on the association with the katanin complex formed by KATNA1 and KATNB1. Enhances the microtubule lattice severing activity of KATNA1 by recruiting the katanin complex to microtubules. Can block microtubule minus-end growth and reversely this function can be enhanced by the katanin complex. May have a preferential role in regulating neurogenesis. The sequence is that of Abnormal spindle-like microcephaly-associated protein (ASPM) from Homo sapiens (Human).